We begin with the raw amino-acid sequence, 205 residues long: Cytochrome c oxidase subunit 3 (205 aa).

Helical transmembrane passes span 29 to 49, 73 to 93, 104 to 124, 144 to 164, and 184 to 204; these read TIVF…MYFV, LAIT…VFAA, WFLI…YEYF, ITTG…VVVL, and SYYW…IYFI.

The protein belongs to the cytochrome c oxidase subunit 3 family. Associates with subunits I, II and IV to form cytochrome c oxidase.

It is found in the cell membrane. The enzyme catalyses 4 Fe(II)-[cytochrome c] + O2 + 8 H(+)(in) = 4 Fe(III)-[cytochrome c] + 2 H2O + 4 H(+)(out). This Corynebacterium efficiens (strain DSM 44549 / YS-314 / AJ 12310 / JCM 11189 / NBRC 100395) protein is Cytochrome c oxidase subunit 3 (ctaE).